A 644-amino-acid chain; its full sequence is L-aspartate oxidase 2-a, chloroplastic (644 aa).

FAD is bound by residues serine 94 to alanine 97, lysine 116, asparagine 123 to glycine 130, and aspartate 294. The Proton donor/acceptor role is filled by arginine 369. Residues glutamate 454 and serine 470–leucine 471 each bind FAD.

It belongs to the FAD-dependent oxidoreductase 2 family. NadB subfamily. Requires FAD as cofactor.

Its subcellular location is the plastid. It localises to the chloroplast. The catalysed reaction is L-aspartate + O2 = iminosuccinate + H2O2. Its pathway is alkaloid biosynthesis; nicotine biosynthesis. The protein operates within cofactor biosynthesis; NAD(+) biosynthesis; iminoaspartate from L-aspartate (oxidase route): step 1/1. In terms of biological role, involved in the biosynthesis of pyridine alkaloid natural products, leading mainly to the production of anabasine, anatabine, nicotine and nornicotine, effective deterrents against herbivores with antiparasitic and pesticide properties (neurotoxins); nornicotine serves as the precursor in the synthesis of the carcinogen compound N'-nitrosonornicotine (NNN). Catalyzes the oxidation of L-aspartate to iminoaspartate. In Nicotiana tabacum (Common tobacco), this protein is L-aspartate oxidase 2-a, chloroplastic.